The primary structure comprises 151 residues: MHSLQAKILDPRLGSDFPLPQYATPGSAGLDLRAMLKEDSVLGPGQTLLIPTGLSIYIADPGLAALVLPRSGLGHKHGIVLGNLVGLIDSDYQGELMVSCWNRGESPFTIAVGERIAQLVLVPVVQAHFELVEAFDESQRGAGGFGHSGSH.

Substrate is bound by residues 70–72, Asn-83, 87–89, and Met-97; these read RSG and LID.

Belongs to the dUTPase family. It depends on Mg(2+) as a cofactor.

It catalyses the reaction dUTP + H2O = dUMP + diphosphate + H(+). The protein operates within pyrimidine metabolism; dUMP biosynthesis; dUMP from dCTP (dUTP route): step 2/2. Its function is as follows. This enzyme is involved in nucleotide metabolism: it produces dUMP, the immediate precursor of thymidine nucleotides and it decreases the intracellular concentration of dUTP so that uracil cannot be incorporated into DNA. The protein is Deoxyuridine 5'-triphosphate nucleotidohydrolase of Pseudomonas aeruginosa (strain LESB58).